A 129-amino-acid chain; its full sequence is Holo-[acyl-carrier-protein] synthase (129 aa).

2 residues coordinate Mg(2+): Asp8 and Glu58.

The protein belongs to the P-Pant transferase superfamily. AcpS family. Mg(2+) serves as cofactor.

Its subcellular location is the cytoplasm. The catalysed reaction is apo-[ACP] + CoA = holo-[ACP] + adenosine 3',5'-bisphosphate + H(+). In terms of biological role, transfers the 4'-phosphopantetheine moiety from coenzyme A to a Ser of acyl-carrier-protein. In Geobacillus kaustophilus (strain HTA426), this protein is Holo-[acyl-carrier-protein] synthase.